A 398-amino-acid chain; its full sequence is Secreted aspartic protease 2 (398 aa).

The signal sequence occupies residues 1-18 (MFLKNIFIALAIALLVDA). Residues 19 to 56 (TPTTTKRSAGFVALDFSVVKTPKAFPVTNGQEGKTSKR) constitute a propeptide, activation peptide. The region spanning 70-384 (YAADITVGSN…DLDDNEISLA (315 aa)) is the Peptidase A1 domain. Residue Asp88 is part of the active site. 88–90 (DTG) provides a ligand contact to pepstatin A. The cysteines at positions 103 and 115 are disulfide-linked. 141–142 (GD) is a binding site for pepstatin A. Residues Asp247 and Asp270 each coordinate Zn(2+). The active site involves Asp274. 274–278 (DSGTT) lines the pepstatin A pocket. Residues Cys312 and Cys350 are joined by a disulfide bond. 2 N-linked (GlcNAc...) asparagine glycosylation sites follow: Asn313 and Asn321.

This sequence belongs to the peptidase A1 family. In terms of assembly, monomer.

The protein localises to the secreted. It carries out the reaction Preferential cleavage at the carboxyl of hydrophobic amino acids, but fails to cleave 15-Leu-|-Tyr-16, 16-Tyr-|-Leu-17 and 24-Phe-|-Phe-25 of insulin B chain. Activates trypsinogen, and degrades keratin.. Secreted aspartic peptidases (SAPs) are a group of ten acidic hydrolases considered as key virulence factors. These enzymes supply the fungus with nutrient amino acids as well as are able to degrade the selected host's proteins involved in the immune defense. Induces host inflammatory cytokine production in a proteolytic activity-independent way. Plays a role in tissue damage during superficial infection. Moreover, acts toward human hemoglobin though limited proteolysis to generate a variety of antimicrobial hemocidins, enabling to compete with the other microorganisms of the same physiological niche using the microbicidal peptides generated from the host protein. Functionally, plays a key role in defense against host by cleaving histatin-5 (Hst 5), a peptide from human saliva that carries out fungicidal activity. The cleavage rate decreases in an order of SAP2 &gt; SAP9 &gt; SAP3 &gt; SAP7 &gt; SAP4 &gt; SAP1 &gt; SAP8. The first cleavage occurs between residues 'Lys-17' and 'His-18' of Hst 5, giving DSHAKRHHGYKRKFHEK and HHSHRGY peptides. Simultaneously, the DSHAKRHHGYKRK peptide is also formed. Further fragmentation by SAP2 results in FHEK and DSHAKRHHGY products. This is Secreted aspartic protease 2 from Candida albicans (Yeast).